The primary structure comprises 153 residues: Fucose mutarotase (153 aa).

Catalysis depends on His-24, which acts as the Proton donor. Asp-32 is a binding site for substrate. Asp-69 is an active-site residue. Substrate contacts are provided by Met-79, Tyr-120, Tyr-138, and Asn-140. The active site involves Tyr-120.

The protein belongs to the RbsD / FucU family. As to quaternary structure, mainly homodimer, but also exists as homotetramer, homooctamer, and homodecamer. The homodimeric form seems catalytically inactive. As to expression, widely expressed in various tissues and cell lines, including kidney, liver, and pancreas, marginally in muscle and testis.

The enzyme catalyses alpha-L-fucose = beta-L-fucose. It functions in the pathway carbohydrate metabolism; L-fucose metabolism. Functionally, involved in the interconversion between alpha- and beta-L-fucoses. L-Fucose (6-deoxy-L-galactose) exists as alpha-L-fucose (29.5%) and beta-L-fucose (70.5%), the beta-form is metabolized through the salvage pathway. GDP-L-fucose formed either by the de novo or salvage pathways is transported into the endoplasmic reticulum, where it serves as a substrate for N- and O-glycosylations by fucosyltransferases. Fucosylated structures expressed on cell surfaces or secreted in biological fluids are believed to play a critical role in cell-cell adhesion and recognition processes. The polypeptide is Fucose mutarotase (Fuom) (Mus musculus (Mouse)).